Consider the following 347-residue polypeptide: RNA 3'-terminal phosphate cyclase (347 aa).

Residues Gln-109 and 290–294 (YLADQ) each bind ATP. The active-site Tele-AMP-histidine intermediate is His-315.

This sequence belongs to the RNA 3'-terminal cyclase family. Type 1 subfamily.

Its subcellular location is the cytoplasm. The enzyme catalyses a 3'-end 3'-phospho-ribonucleotide-RNA + ATP = a 3'-end 2',3'-cyclophospho-ribonucleotide-RNA + AMP + diphosphate. Functionally, catalyzes the conversion of 3'-phosphate to a 2',3'-cyclic phosphodiester at the end of RNA. The mechanism of action of the enzyme occurs in 3 steps: (A) adenylation of the enzyme by ATP; (B) transfer of adenylate to an RNA-N3'P to produce RNA-N3'PP5'A; (C) and attack of the adjacent 2'-hydroxyl on the 3'-phosphorus in the diester linkage to produce the cyclic end product. The biological role of this enzyme is unknown but it is likely to function in some aspects of cellular RNA processing. The polypeptide is RNA 3'-terminal phosphate cyclase (Ralstonia nicotianae (strain ATCC BAA-1114 / GMI1000) (Ralstonia solanacearum)).